The chain runs to 379 residues: S-adenosylmethionine decarboxylase proenzyme (379 aa).

Catalysis depends on residues Glu30 and Glu33. Ser96 functions as the Schiff-base intermediate with substrate; via pyruvic acid in the catalytic mechanism. The residue at position 96 (Ser96) is a Pyruvic acid (Ser); by autocatalysis. Cys110 (proton donor; for catalytic activity) is an active-site residue. Active-site proton acceptor; for processing activity residues include Ser254 and His267.

The protein belongs to the eukaryotic AdoMetDC family. Heterotetramer of two alpha and two beta chains. Pyruvate is required as a cofactor. In terms of processing, is synthesized initially as an inactive proenzyme. Formation of the active enzyme involves a self-maturation process in which the active site pyruvoyl group is generated from an internal serine residue via an autocatalytic post-translational modification. Two non-identical subunits are generated from the proenzyme in this reaction, and the pyruvate is formed at the N-terminus of the alpha chain, which is derived from the carboxyl end of the proenzyme. The post-translation cleavage follows an unusual pathway, termed non-hydrolytic serinolysis, in which the side chain hydroxyl group of the serine supplies its oxygen atom to form the C-terminus of the beta chain, while the remainder of the serine residue undergoes an oxidative deamination to produce ammonia and the pyruvoyl group blocking the N-terminus of the alpha chain.

The catalysed reaction is S-adenosyl-L-methionine + H(+) = S-adenosyl 3-(methylsulfanyl)propylamine + CO2. It participates in amine and polyamine biosynthesis; S-adenosylmethioninamine biosynthesis; S-adenosylmethioninamine from S-adenosyl-L-methionine: step 1/1. Functionally, S-adenosylmethionine decarboxylase is essential for the biosynthesis of spermine and spermidine. The alpha subunit contains the active site. The polypeptide is S-adenosylmethionine decarboxylase proenzyme (amd1) (Dictyostelium discoideum (Social amoeba)).